The chain runs to 415 residues: MERIIGGKYKLGRKIGGGSFGEIFLATHVDTFEIVAVKIENSKTKHPQLLYEAKLYRILEGGSGIPRIKWFGVDGTENALVMDLLGPSLEDLFVYCGRKFSPKTVLMLADQMLTRIEFVHSKGYLHRDIKPDNFLMGLGRKANQVYLIDFGLAKRYRDANTNRHIPYRENKNLTGTARYASCNTHLGIEQSRRDDLESLGYVLLYFLRGSLPWQGLKAVDKKQKYDKICEKKISTPIEVLCKNHPVEFASYFHYCHTLTFDQRPDYGFLKRLFRDLFSREGYEFDYIFDWTIIKYQQAQKSRNQSQAVPGSSNPRAMPVDTSNHRGGPNISYEAEASERVRSANAIGPSPQINNNTAAGRTPGFDHPVHKNMNMPSTSLSPAGTSKRNVGPETSNSGYGSGNRTGWTSSFMSPEK.

The Protein kinase domain occupies 9–277 (YKLGRKIGGG…FLKRLFRDLF (269 aa)). Residues 15–23 (IGGGSFGEI) and K38 contribute to the ATP site. The Proton acceptor role is filled by D128. 2 stretches are compositionally biased toward polar residues: residues 303–314 (NQSQAVPGSSNP) and 373–415 (NMPS…SPEK). Disordered regions lie at residues 303-330 (NQSQAVPGSSNPRAMPVDTSNHRGGPNI) and 344-415 (NAIG…SPEK).

This sequence belongs to the protein kinase superfamily. CK1 Ser/Thr protein kinase family. Casein kinase I subfamily. Slightly autophosphorylated. As to expression, expressed in seedlings, stems, leaves and flowers.

It localises to the cytoplasm. It is found in the nucleus. The catalysed reaction is L-seryl-[protein] + ATP = O-phospho-L-seryl-[protein] + ADP + H(+). It catalyses the reaction L-threonyl-[protein] + ATP = O-phospho-L-threonyl-[protein] + ADP + H(+). Protein kinase involved in blue light responses (e.g. hypocotyl elongation and flowering) by phosphorylating CRY2 to reduce its stability. This chain is Casein kinase 1-like protein 3, found in Arabidopsis thaliana (Mouse-ear cress).